The following is a 234-amino-acid chain: MTHPFVLLKWLIAKLHFGFSAEMLEQHGFFQHVTHTWLVMAILIGVGLLATHRAGLVPGGMQNFMELVLVEIRGMVRDTMGPKGMVYFPLIATLALFLLVSNLIGLIPGFAPPTASLNTNAALAVGVFLVTHIVGVREHGIRYFKHFMGPVWWLTPLILPIELIGHLARPLSLSLRLFGNMYGHEIVLMIFFSLVPLLLPIPMMLMGILVAFIQTFVFMLLSMIYIAGALEEAH.

Transmembrane regions (helical) follow at residues 29–49 (FFQH…VGLL), 90–110 (LIAT…IPGF), 116–136 (SLNT…IVGV), 147–167 (FMGP…IGHL), 186–206 (IVLM…MMLM), and 207–227 (GILV…IYIA).

Belongs to the ATPase A chain family. As to quaternary structure, F-type ATPases have 2 components, CF(1) - the catalytic core - and CF(0) - the membrane proton channel. CF(1) has five subunits: alpha(3), beta(3), gamma(1), delta(1), epsilon(1). CF(0) has three main subunits: a(1), b(2) and c(9-12). The alpha and beta chains form an alternating ring which encloses part of the gamma chain. CF(1) is attached to CF(0) by a central stalk formed by the gamma and epsilon chains, while a peripheral stalk is formed by the delta and b chains.

Its subcellular location is the cell inner membrane. Key component of the proton channel; it plays a direct role in the translocation of protons across the membrane. This Syntrophotalea carbinolica (strain DSM 2380 / NBRC 103641 / GraBd1) (Pelobacter carbinolicus) protein is ATP synthase subunit a 2.